We begin with the raw amino-acid sequence, 122 residues long: Large ribosomal subunit protein bL12 (122 aa).

It belongs to the bacterial ribosomal protein bL12 family. In terms of assembly, homodimer. Part of the ribosomal stalk of the 50S ribosomal subunit. Forms a multimeric L10(L12)X complex, where L10 forms an elongated spine to which 2 to 4 L12 dimers bind in a sequential fashion. Binds GTP-bound translation factors.

In terms of biological role, forms part of the ribosomal stalk which helps the ribosome interact with GTP-bound translation factors. Is thus essential for accurate translation. The sequence is that of Large ribosomal subunit protein bL12 from Shewanella denitrificans (strain OS217 / ATCC BAA-1090 / DSM 15013).